The primary structure comprises 305 residues: MWNLRITPLSFGAACQGIFTSTLLLSALTVPLVCTIVYDSCLYMDINASRALANVYDLPDDFFPKIDDLVRDAKDALEPYWKSDSIKKHVLIATHFVDLIEDFWQTTQGMHEIAESLRAVIPPTTAPVPTGYLIQHEEAEEIPLGDLFKHQEERIVSFQPDYPITARIHAHLKAYAKINEESLDRARRLLWWHYNCLLWGEANVTNYISRLRTWLSTPEKYRGRDAPTIEAITRPIQVAQGGRKTSSGTRKPRGLEPRRRKVKTTFVYGRRRSKSRERRAPSPQRAGSPLPRSSSSHHRSPSPRK.

A signal peptide spans 1–19 (MWNLRITPLSFGAACQGIF). The tract at residues 226 to 305 (APTIEAITRP…SHHRSPSPRK (80 aa)) is disordered. Basic residues-rich tracts occupy residues 258–277 (RRRK…KSRE) and 295–305 (SSHHRSPSPRK). Positions 273–305 (SKSRERRAPSPQRAGSPLPRSSSSHHRSPSPRK) are excised as a propeptide.

It belongs to the avihepadnavirus precore antigen family. Homodimerizes.

It is found in the secreted. In terms of biological role, may regulate immune response to the intracellular capsid in acting as a T-cell tolerogen, by having an immunoregulatory effect which prevents destruction of infected cells by cytotoxic T-cells. The polypeptide is External core antigen (C) (Duck hepatitis B virus (isolate white Shanghai duck S31) (DHBV)).